The following is a 464-amino-acid chain: Uronate isomerase (464 aa).

Belongs to the metallo-dependent hydrolases superfamily. Uronate isomerase family.

It catalyses the reaction D-glucuronate = D-fructuronate. It carries out the reaction aldehydo-D-galacturonate = keto-D-tagaturonate. It functions in the pathway carbohydrate metabolism; pentose and glucuronate interconversion. The chain is Uronate isomerase from Caldicellulosiruptor saccharolyticus (strain ATCC 43494 / DSM 8903 / Tp8T 6331).